The following is a 227-amino-acid chain: Ashwin (227 aa).

A compositionally biased stretch (basic and acidic residues) spans 71–84 (LPRSRWGKRMEKSR). The segment at 71–227 (LPRSRWGKRM…KKKIQHITWP (157 aa)) is disordered. The segment covering 88 to 98 (SSSSTHSSSTD) has biased composition (low complexity). The span at 153–173 (GASTNCSSSNFSNRTPVSSSG) shows a compositional bias: polar residues. Residues 178–191 (SPSNHSNSSVHSNN) show a composition bias toward low complexity. Over residues 204–219 (GEPDTAKDIKSPETKK) the composition is skewed to basic and acidic residues.

Belongs to the ashwin family.

It is found in the nucleus. The chain is Ashwin from Danio rerio (Zebrafish).